We begin with the raw amino-acid sequence, 444 residues long: Tol-Pal system protein TolB (444 aa).

Residues 1–19 (MRNIIYFILSLLFSVTSYA) form the signal peptide.

It belongs to the TolB family. As to quaternary structure, the Tol-Pal system is composed of five core proteins: the inner membrane proteins TolA, TolQ and TolR, the periplasmic protein TolB and the outer membrane protein Pal. They form a network linking the inner and outer membranes and the peptidoglycan layer.

It is found in the periplasm. Its function is as follows. Part of the Tol-Pal system, which plays a role in outer membrane invagination during cell division and is important for maintaining outer membrane integrity. The sequence is that of Tol-Pal system protein TolB from Rickettsia rickettsii (strain Iowa).